Here is a 354-residue protein sequence, read N- to C-terminus: Macrosialin (354 aa).

The signal sequence occupies residues 1–21 (MRLAVLFSGALLGLLAAQGTG). Residues 22-319 (NDCPHKKSAT…QSFSCPSDRS (298 aa)) lie on the Extracellular side of the membrane. Residues 23 to 140 (DCPHKKSATL…SPGFTSSAHP (118 aa)) form a mucin-like region. Positions 40-51 (PTVTESTGTTSH) are enriched in low complexity. The interval 40–162 (PTVTESTGTT…SKETIGDYTW (123 aa)) is disordered. The span at 52-61 (RTTKSHKTTT) shows a compositional bias: basic residues. A compositionally biased stretch (low complexity) spans 62 to 84 (HRTTTTGTTSHGPTTATHNPTTT). 2 repeat units span residues 70–99 (TSHG…NSTA) and 100–129 (TSQG…NSTA). A 2 X 30 AA tandem repeats region spans residues 70–129 (TSHGPTTATHNPTTTSHGNVTVHPTSNSTATSQGPSTATHSPATTSHGNATVHPTSNSTA). Positions 85-102 (SHGNVTVHPTSNSTATSQ) are enriched in polar residues. N-linked (GlcNAc...) asparagine glycans are attached at residues N88 and N96. Positions 103 to 117 (GPSTATHSPATTSHG) are enriched in low complexity. N118 and N126 each carry an N-linked (GlcNAc...) asparagine glycan. Residues 121–135 (VHPTSNSTATSPGFT) are compositionally biased toward polar residues. The span at 140–150 (PEPPPPSPSPS) shows a compositional bias: pro residues. N-linked (GlcNAc...) asparagine glycosylation is found at N164, N199, N246, N261, and N279. A disulfide bridge links C169 with C207. C277 and C314 are joined by a disulfide. A helical transmembrane segment spans residues 320-344 (ILLPLIIGLILLGLLALVLIAFCII). At 345-354 (RRRPSAYQAL) the chain is on the cytoplasmic side.

The protein belongs to the LAMP family. N- and O-glycosylated. As to expression, highly expressed by blood monocytes and tissue macrophages. Also expressed in lymphocytes, fibroblasts and endothelial cells. Expressed in many tumor cell lines which could allow them to attach to selectins on vascular endothelium, facilitating their dissemination to secondary sites.

It is found in the cell membrane. The protein localises to the endosome membrane. It localises to the lysosome membrane. Could play a role in phagocytic activities of tissue macrophages, both in intracellular lysosomal metabolism and extracellular cell-cell and cell-pathogen interactions. Binds to tissue- and organ-specific lectins or selectins, allowing homing of macrophage subsets to particular sites. Rapid recirculation of CD68 from endosomes and lysosomes to the plasma membrane may allow macrophages to crawl over selectin-bearing substrates or other cells. The chain is Macrosialin (CD68) from Homo sapiens (Human).